Here is a 54-residue protein sequence, read N- to C-terminus: uncharacterized protein (54 aa).

Residues 23–35 are compositionally biased toward basic and acidic residues; the sequence is DVMQEGETAKELN. The interval 23 to 54 is disordered; it reads DVMQEGETAKELNYEGEDMQATSSAQNRQTSV. The span at 42–54 shows a compositional bias: polar residues; the sequence is QATSSAQNRQTSV.

This is an uncharacterized protein from Bacillus subtilis (strain 168).